A 123-amino-acid polypeptide reads, in one-letter code: Molluscan insulin-related peptide 1 (123 aa).

An N-terminal signal peptide occupies residues 1–31; the sequence is MAGVRLVFTKAFMVTVLLTLLLNIGVKPAEG. Gln32 is subject to Pyrrolidone carboxylic acid. Disulfide bonds link Cys48-Cys109, Cys60-Cys122, and Cys108-Cys113. The propeptide occupies 68 to 69; the sequence is MV. Gln99 is subject to Pyrrolidone carboxylic acid.

It belongs to the insulin family. As to quaternary structure, heterodimer of a B chain and an A chain linked by two disulfide bonds. Expressed in the cerebral light-green cells which are giant neuroendocrines cells involved in the control of growth.

It is found in the cytoplasmic vesicle. The protein localises to the secretory vesicle. This is Molluscan insulin-related peptide 1 from Lymnaea stagnalis (Great pond snail).